Reading from the N-terminus, the 363-residue chain is Fructose-bisphosphate aldolase C-B (363 aa).

Substrate is bound by residues arginine 56 and lysine 147. Glutamate 188 serves as the catalytic Proton acceptor. Lysine 230 functions as the Schiff-base intermediate with dihydroxyacetone-P in the catalytic mechanism.

Belongs to the class I fructose-bisphosphate aldolase family. In terms of assembly, homotetramer.

The catalysed reaction is beta-D-fructose 1,6-bisphosphate = D-glyceraldehyde 3-phosphate + dihydroxyacetone phosphate. Its pathway is carbohydrate degradation; glycolysis; D-glyceraldehyde 3-phosphate and glycerone phosphate from D-glucose: step 4/4. The polypeptide is Fructose-bisphosphate aldolase C-B (aldocb) (Danio rerio (Zebrafish)).